We begin with the raw amino-acid sequence, 472 residues long: Serine/threonine-protein kinase sax-1 (472 aa).

One can recognise a Protein kinase domain in the interval 87–381 (FESLKVIGRG…LDEIKQCPFF (295 aa)). ATP is bound by residues 93-101 (IGRGAFGEV) and Lys-116. The active-site Proton acceptor is Asp-210. An AGC-kinase C-terminal domain is found at 382–452 (RRIDWNHIRE…KRFDGLTQKM (71 aa)).

The protein belongs to the protein kinase superfamily. AGC Ser/Thr protein kinase family. Requires Mg(2+) as cofactor.

It localises to the cytoplasm. The protein resides in the nucleus. It carries out the reaction L-seryl-[protein] + ATP = O-phospho-L-seryl-[protein] + ADP + H(+). The catalysed reaction is L-threonyl-[protein] + ATP = O-phospho-L-threonyl-[protein] + ADP + H(+). Its function is as follows. Acts with sax-2 to restrict the growth of both primary and secondary neurites. Regulates mechanosensory tiling by controlling the termination point of sensory dendrites. The chain is Serine/threonine-protein kinase sax-1 from Caenorhabditis briggsae.